The chain runs to 171 residues: Putative charged multivesicular body protein 4B-like protein CHMP4BP1 (171 aa).

Residues 1 to 17 show a composition bias toward basic and acidic residues; the sequence is MLSKKQEFLEKKIEQRH. Disordered regions lie at residues 1-24 and 132-171; these read MLSK…NKPA and EQEE…KTTT.

This sequence belongs to the SNF7 family.

In Homo sapiens (Human), this protein is Putative charged multivesicular body protein 4B-like protein CHMP4BP1 (CHMP4BP1).